Here is a 1109-residue protein sequence, read N- to C-terminus: Receptor-like protein kinase (1109 aa).

The N-terminal stretch at 1 to 20 is a signal peptide; the sequence is MKVAVNTFLLFLCSTSSIYA. Residues 21-764 are Extracellular-facing; it reads AFALNSDGAA…GGLSTLGIAM (744 aa). N-linked (GlcNAc...) asparagine glycans are attached at residues Asn50, Asn74, and Asn114. LRR repeat units follow at residues 69 to 92, 93 to 115, 117 to 140, 141 to 162, 165 to 187, and 189 to 209; these read FVDTLNLSSYGISGEFGPEISHLK, HLKKVVLSGNGFFGSIPSQLGNC, LLEHIDLSSNSFTGNIPDTLGALQ, NLRNLSLFFNSLIGPFPESLLS, HLETVYFTGNGLNGSIPSNIGNM, and ELTTLWLDDNQFSGPVPSSLG. Asn144, Asn177, and Asn186 each carry an N-linked (GlcNAc...) asparagine glycan. N-linked (GlcNAc...) asparagine glycosylation occurs at Asn210. 20 LRR repeats span residues 213 to 236, 237 to 258, 261 to 284, 309 to 331, 333 to 355, 357 to 378, 381 to 404, 405 to 427, 429 to 451, 453 to 476, 477 to 499, 500 to 523, 524 to 546, 548 to 569, 572 to 595, 596 to 618, 620 to 642, 643 to 666, 667 to 689, and 690 to 710; these read TLQELYLNDNNLVGTLPVTLNNLE, NLVYLDVRNNSLVGAIPLDFVS, QIDTISLSNNQFTGGLPPGLGNCT, KLDTLYLAGNHFSGRIPPELGKC, SMIDLQLQQNQLEGEIPGELGML, QLQYLHLYTNNLSGEVPLSIWK, SLQSLQLYQNNLSGELPVDMTELK, QLVSLALYENHFTGVIPQDLGAN, SLEVLDLTRNMFTGHIPPNLCSQ, KLKRLLLGYNYLEGSVPSDLGGCS, TLERLILEENNLRGGLPDFVEKQ, NLLFFDLSGNNFTGPIPPSLGNLK, NVTAIYLSSNQLSGSIPPELGSL, KLEHLNLSHNILKGILPSELSN, KLSELDASHNLLNGSIPSTLGSLT, ELTKLSLGENSFSGGIPTSLFQS, KLLNLQLGGNLLAGDIPPVGALQ, ALRSLNLSSNKLNGQLPIDLGKLK, MLEELDVSHNNLSGTLRVLSTIQ, and SLTFINISHNLFSGPVPPSLT. N-linked (GlcNAc...) asparagine glycans are attached at residues Asn245 and Asn282. Asn367, Asn391, and Asn427 each carry an N-linked (GlcNAc...) asparagine glycan. 4 N-linked (GlcNAc...) asparagine glycosylation sites follow: Asn510, Asn524, Asn553, and Asn584. N-linked (GlcNAc...) asparagine glycans are attached at residues Asn648, Asn677, and Asn695. Residues 765-785 form a helical membrane-spanning segment; the sequence is IVLGALLFIICLFLFSAFLFL. Topologically, residues 786-1109 are cytoplasmic; that stretch reads HCKKSVQEIA…YSSSVRNKSK (324 aa). A Protein kinase domain is found at 816 to 1096; it reads LNDKYVIGKG…DVVKQLTRWS (281 aa). ATP is bound by residues 822 to 830 and Lys845; that span reads IGKGAHGTI. Residues 827-850 form an LRR 27 repeat; that stretch reads HGTIYKATLSPDKVYAVKKLVFTG. Residue Asp942 is the Proton acceptor of the active site. The stretch at 958–981 is one LRR 28 repeat; it reads ISDFGIAKLLDQSATSIPSNTVQG.

Belongs to the protein kinase superfamily. Ser/Thr protein kinase family. INRPK1 and INRPK1b are expressed in leaves, cotyledons, shoot tips and roots from induced and vegetative plants. The highest concentrations of INRPK1 are found in vegetative roots, and the lowest concentrations in vegetative cotyledons. INRPK1b is more abundant in roots than other tissues. INRPK1a is expressed in vegetative roots. INRPK1c is expressed in cotyledons.

It localises to the cell membrane. It is found in the secreted. It carries out the reaction L-seryl-[protein] + ATP = O-phospho-L-seryl-[protein] + ADP + H(+). The enzyme catalyses L-threonyl-[protein] + ATP = O-phospho-L-threonyl-[protein] + ADP + H(+). Its function is as follows. Possible role in short-day photoperiod floral induction. This is Receptor-like protein kinase (INRPK1) from Ipomoea nil (Japanese morning glory).